Here is a 1883-residue protein sequence, read N- to C-terminus: MGKRAGGGATGATTAAVSTSAGAGLEPAAARSGGPRSAAAGLLGALHLVMTLVVAAARAEKEAFVQSESIIEVLRFDDGGLLQTETTLGLSSYQQKSISLYRGNCRPIRFEPPMLDFHEQPVGMPKMEKVYLHNPSSEETITLVSISATTSHFHASFFQNRKILPGGNTSFDVVFLARVVGNVENTLFINTSNHGVFTYQVFGVGVPNPYRLRPFLGARVPVNSSFSPIINIHNPHSEPLQVVEMYSSGGDLHLELPTGQQGGTRKLWEIPPYETKGVMRASFSSREADNHTAFIRIKTNASDSTEFIILPVEVEVTTAPGIYSSTEMLDFGTLRTQDLPKVLNLHLLNSGTKDVPITSVRPTPQNDAITVHFKPITLKASESKYTKVASISFDASKAKKPSQFSGKITVKAKEKSYSKLEIPYQAEVLDGYLGFDHAATLFHIRDSPADPVERPIYLTNTFSFAILIHDVLLPEEAKTMFKVHNFSKPVLILPNESGYIFTLLFMPSTSSMHIDNNILLITNASKFHLPVRVYTGFLDYFVLPPKIEERFIDFGVLSATEASNILFAIINSNPIELAIKSWHIIGDGLSIELVAVERGNRTTIISSLPEFEKSSLSDQSSVTLASGYFAVFRVKLTAKKLEGIHDGAIQITTDYEILTIPVKAVIAVGSLTCFPKHVVLPPSFPGKIVHQSLNIMNSFSQKVKIQQIRSLSEDVRFYYKRLRGNKEDLEPGKKSKIANIYFDPGLQCGDHCYVGLPFLSKSEPKVQPGVAMQEDMWDADWDLHQSLFKGWTGIKENSGHRLSAIFEVNTDLQKNIISKITAELSWPSILSSPRHLKFPLTNTNCSSEEEITLENPADVPVYVQFIPLALYSNPSVFVDKLVSRFNLSKVAKIDLRTLEFQVFRNSAHPLQSSTGFMEGLSRHLILNLILKPGEKKSVKVKFTPVHNRTVSSLIIVRNNLTVMDAVMVQGQGTTENLRVAGKLPGPGSSLRFKITEALLKDCTDSLKLREPNFTLKRTFKVENTGQLQIHIETIEISGYSCEGYGFKVVNCQEFTLSANASRDIIILFTPDFTASRVIRELKFITTSGSEFVFILNASLPYHMLATCAEALPRPNWELALYIIISGIMSALFLLVIGTAYLEAQGIWEPFRRRLSFEASNPPFDVGRPFDLRRIVGISSEGNLNTLSCDPGHSRGFCGAGGSSSRPSAGSHKQCGPSVHPHSSHSNRNSADVENVRAKNSSSTSSRTSAQAASSQSANKTSPLVLDSNTVTQGHTAGRKSKGAKQSQHGSQHHAHSPLEQHPQPPLPPPVPQPQEPQPERLSPAPLAHPSHPERASSARHSSEDSDITSLIEAMDKDFDHHDSPALEVFTEQPPSPLPKSKGKGKPLQRKVKPPKKQEEKEKKGKGKPQEDELKDSLADDDSSSTTTETSNPDTEPLLKEDTEKQKGKQAMPEKHESEMSQVKQKSKKLLNIKKEIPTDVKPSSLELPYTPPLESKQRRNLPSKIPLPTAMTSGSKSRNAQKTKGTSKLVDNRPPALAKFLPNSQELGNTSSSEGEKDSPPPEWDSVPVHKPGSSTDSLYKLSLQTLNADIFLKQRQTSPTPASPSPPAAPCPFVARGSYSSIVNSSSSSDPKIKQPNGSKHKLTKAASLPGKNGNPTFAAVTAGYDKSPGGNGFAKVSSNKTGFSSSLGISHAPVDSDGSDSSGLWSPVSNPSSPDFTPLNSFSAFGNSFNLTGEVFSKLGLSRSCNQASQRSWNEFNSGPSYLWESPATDPSPSWPASSGSPTHTATSVLGNTSGLWSTTPFSSSIWSSNLSSALPFTTPANTLASIGLMGTENSPAPHAPSTSSPADDLGQTYNPWRIWSPTIGRRSSDPWSNSHFPHEN.

The signal sequence occupies residues 1–22; it reads MGKRAGGGATGATTAAVSTSAG. Residues 23–1117 lie on the Lumenal side of the membrane; the sequence is AGLEPAAARS…AEALPRPNWE (1095 aa). The tract at residues 109–283 is papD-L domain; sequence RFEPPMLDFH…ETKGVMRASF (175 aa). N-linked (GlcNAc...) asparagine glycosylation occurs at N300. S803 carries the phosphoserine modification. Residues 1118–1138 traverse the membrane as a helical segment; it reads LALYIIISGIMSALFLLVIGT. Residues 1139-1883 are Cytoplasmic-facing; it reads AYLEAQGIWE…WSNSHFPHEN (745 aa). Disordered stretches follow at residues 1198–1580, 1593–1656, 1670–1712, 1766–1789, and 1832–1858; these read GAGG…DSLY, LKQR…KNGN, PGGN…PVSN, WESPATDPSPSWPASSGSPTHTAT, and MGTENSPAPHAPSTSSPADDLGQTYNP. Over residues 1237-1261 the composition is skewed to low complexity; sequence AKNSSSTSSRTSAQAASSQSANKTS. Pro residues predominate over residues 1302 to 1316; sequence PQPPLPPPVPQPQEP. S1322 and S1342 each carry phosphoserine. 2 stretches are compositionally biased toward basic and acidic residues: residues 1330–1343 and 1353–1364; these read SHPERASSARHSSE and AMDKDFDHHDSP. S1375 is subject to Phosphoserine. Residues 1380 to 1394 show a composition bias toward basic residues; the sequence is SKGKGKPLQRKVKPP. Residues 1395-1417 are compositionally biased toward basic and acidic residues; that stretch reads KKQEEKEKKGKGKPQEDELKDSL. Over residues 1423-1434 the composition is skewed to low complexity; the sequence is SSTTTETSNPDT. The segment covering 1436 to 1458 has biased composition (basic and acidic residues); that stretch reads PLLKEDTEKQKGKQAMPEKHESE. Polar residues-rich tracts occupy residues 1510-1526 and 1542-1553; these read AMTSGSKSRNAQKTKGT and PNSQELGNTSSS. The segment covering 1602 to 1611 has biased composition (pro residues); sequence PASPSPPAAP. Positions 1619 to 1630 are enriched in low complexity; it reads SYSSIVNSSSSS. A compositionally biased stretch (polar residues) spans 1678–1690; the sequence is VSSNKTGFSSSLG. Low complexity-rich tracts occupy residues 1773-1784 and 1837-1849; these read PSPSWPASSGSP and SPAPHAPSTSSPA. Phosphoserine occurs at positions 1863 and 1871.

This sequence belongs to the TMEM131 family. Interacts (via PapD-L domain) with COL1A2 (via C-terminus); the interaction is direct, may occur with other collagen proteins, and is involved in assembly and TRAPPIII ER-to-Golgi transport complex-dependent secretion of collagen. Interacts (via C-terminus) with TRAPPC8 (via C-terminus); the interaction is direct.

The protein resides in the membrane. Collagen binding transmembrane protein involved in collagen secretion by recruiting the ER-to-Golgi transport complex TRAPPIII. May play a role in the immune response to viral infection. This is Transmembrane protein 131 from Homo sapiens (Human).